The sequence spans 432 residues: Lipid-A-disaccharide synthase (432 aa).

Over residues 1-11 (MTGIGNQTSGI) the composition is skewed to polar residues. The interval 1-35 (MTGIGNQTSGIETGVHDRAPADGEPTALPISHSPL) is disordered.

The protein belongs to the LpxB family.

The enzyme catalyses a lipid X + a UDP-2-N,3-O-bis[(3R)-3-hydroxyacyl]-alpha-D-glucosamine = a lipid A disaccharide + UDP + H(+). Its pathway is bacterial outer membrane biogenesis; LPS lipid A biosynthesis. Condensation of UDP-2,3-diacylglucosamine and 2,3-diacylglucosamine-1-phosphate to form lipid A disaccharide, a precursor of lipid A, a phosphorylated glycolipid that anchors the lipopolysaccharide to the outer membrane of the cell. The chain is Lipid-A-disaccharide synthase from Xanthomonas oryzae pv. oryzae (strain MAFF 311018).